The chain runs to 150 residues: UPF0208 membrane protein VIBHAR_02941 (150 aa).

The next 2 membrane-spanning stretches (helical) occupy residues 42 to 62 (FGIK…MAFN) and 70 to 90 (AIVV…WLGS).

It belongs to the UPF0208 family.

It is found in the cell inner membrane. The sequence is that of UPF0208 membrane protein VIBHAR_02941 from Vibrio campbellii (strain ATCC BAA-1116).